A 660-amino-acid polypeptide reads, in one-letter code: Acetyl-coenzyme A synthetase (660 aa).

CoA contacts are provided by residues 197–200 (RGGK) and T317. Residues 397-399 (GEP), 421-426 (DTFWQT), D512, and R528 contribute to the ATP site. S536 lines the CoA pocket. R539 serves as a coordination point for ATP. Residues V550 and V555 each contribute to the Mg(2+) site. Position 625 is an N6-acetyllysine (K625).

This sequence belongs to the ATP-dependent AMP-binding enzyme family. It depends on Mg(2+) as a cofactor. Acetylated. Deacetylation by the SIR2-homolog deacetylase activates the enzyme.

The enzyme catalyses acetate + ATP + CoA = acetyl-CoA + AMP + diphosphate. Catalyzes the conversion of acetate into acetyl-CoA (AcCoA), an essential intermediate at the junction of anabolic and catabolic pathways. AcsA undergoes a two-step reaction. In the first half reaction, AcsA combines acetate with ATP to form acetyl-adenylate (AcAMP) intermediate. In the second half reaction, it can then transfer the acetyl group from AcAMP to the sulfhydryl group of CoA, forming the product AcCoA. This is Acetyl-coenzyme A synthetase from Cupriavidus metallidurans (strain ATCC 43123 / DSM 2839 / NBRC 102507 / CH34) (Ralstonia metallidurans).